The sequence spans 399 residues: DNA polymerase IV (399 aa).

Positions Ile-5–Gly-187 constitute a UmuC domain. The Mg(2+) site is built by Asp-9 and Asp-105. The active site involves Glu-106.

This sequence belongs to the DNA polymerase type-Y family. As to quaternary structure, monomer. Requires Mg(2+) as cofactor.

Its subcellular location is the cytoplasm. It carries out the reaction DNA(n) + a 2'-deoxyribonucleoside 5'-triphosphate = DNA(n+1) + diphosphate. Its function is as follows. Poorly processive, error-prone DNA polymerase involved in untargeted mutagenesis. Copies undamaged DNA at stalled replication forks, which arise in vivo from mismatched or misaligned primer ends. These misaligned primers can be extended by PolIV. Exhibits no 3'-5' exonuclease (proofreading) activity. May be involved in translesional synthesis, in conjunction with the beta clamp from PolIII. In Acetivibrio thermocellus (strain ATCC 27405 / DSM 1237 / JCM 9322 / NBRC 103400 / NCIMB 10682 / NRRL B-4536 / VPI 7372) (Clostridium thermocellum), this protein is DNA polymerase IV.